The chain runs to 246 residues: Probable transcriptional regulatory protein WP1214 (246 aa).

The segment at 1–22 (MAGHSQFSNIKHRKGAQDAKRS) is disordered.

This sequence belongs to the TACO1 family.

It localises to the cytoplasm. The chain is Probable transcriptional regulatory protein WP1214 from Wolbachia pipientis subsp. Culex pipiens (strain wPip).